The following is a 346-amino-acid chain: Melanoma-associated antigen B3 (346 aa).

Positions M1 to K35 are disordered. Over residues T18–T33 the composition is skewed to polar residues. The MAGE domain maps to L111–A310.

In terms of tissue distribution, expressed in testis.

The sequence is that of Melanoma-associated antigen B3 (MAGEB3) from Homo sapiens (Human).